Here is a 505-residue protein sequence, read N- to C-terminus: ATP synthase subunit beta, mitochondrial (505 aa).

A mitochondrion-targeting transit peptide spans 1–31 (MFALRAASKADKNLLPFLGQLSRSHAAKAAK). An ATP-binding site is contributed by 183–190 (GGAGVGKT).

The protein belongs to the ATPase alpha/beta chains family. As to quaternary structure, F-type ATPases have 2 components, CF(1) - the catalytic core - and CF(0) - the membrane proton channel. CF(1) has five subunits: alpha(3), beta(3), gamma(1), delta(1), epsilon(1). CF(0) has three main subunits: a, b and c.

Its subcellular location is the mitochondrion. It localises to the mitochondrion inner membrane. The catalysed reaction is ATP + H2O + 4 H(+)(in) = ADP + phosphate + 5 H(+)(out). Functionally, mitochondrial membrane ATP synthase (F(1)F(0) ATP synthase or Complex V) produces ATP from ADP in the presence of a proton gradient across the membrane which is generated by electron transport complexes of the respiratory chain. F-type ATPases consist of two structural domains, F(1) - containing the extramembraneous catalytic core, and F(0) - containing the membrane proton channel, linked together by a central stalk and a peripheral stalk. During catalysis, ATP synthesis in the catalytic domain of F(1) is coupled via a rotary mechanism of the central stalk subunits to proton translocation. Subunits alpha and beta form the catalytic core in F(1). Rotation of the central stalk against the surrounding alpha(3)beta(3) subunits leads to hydrolysis of ATP in three separate catalytic sites on the beta subunits. The chain is ATP synthase subunit beta, mitochondrial from Drosophila melanogaster (Fruit fly).